A 182-amino-acid polypeptide reads, in one-letter code: Putative colanic acid biosynthesis acetyltransferase WcaF (182 aa).

The protein belongs to the transferase hexapeptide repeat family.

Its pathway is slime biogenesis; slime polysaccharide biosynthesis. This is Putative colanic acid biosynthesis acetyltransferase WcaF (wcaF) from Shigella flexneri.